The primary structure comprises 98 residues: NADH-ubiquinone oxidoreductase chain 4L (98 aa).

The next 3 membrane-spanning stretches (helical) occupy residues 1 to 21 (MSLV…GLLM), 29 to 49 (SLLC…IMVL), and 61 to 81 (IILL…LVMV).

It belongs to the complex I subunit 4L family. In terms of assembly, core subunit of respiratory chain NADH dehydrogenase (Complex I) which is composed of 45 different subunits.

Its subcellular location is the mitochondrion inner membrane. It carries out the reaction a ubiquinone + NADH + 5 H(+)(in) = a ubiquinol + NAD(+) + 4 H(+)(out). Core subunit of the mitochondrial membrane respiratory chain NADH dehydrogenase (Complex I) which catalyzes electron transfer from NADH through the respiratory chain, using ubiquinone as an electron acceptor. Part of the enzyme membrane arm which is embedded in the lipid bilayer and involved in proton translocation. This chain is NADH-ubiquinone oxidoreductase chain 4L (MT-ND4L), found in Pseudosoriculus fumidus (Taiwanese brown-toothed shrew).